Consider the following 66-residue polypeptide: UPF0434 protein M446_0487 (66 aa).

The protein belongs to the UPF0434 family.

In Methylobacterium sp. (strain 4-46), this protein is UPF0434 protein M446_0487.